The sequence spans 76 residues: Large ribosomal subunit protein bL31 (76 aa).

Zn(2+) contacts are provided by cysteine 16, cysteine 18, cysteine 37, and cysteine 40.

It belongs to the bacterial ribosomal protein bL31 family. Type A subfamily. As to quaternary structure, part of the 50S ribosomal subunit. Zn(2+) is required as a cofactor.

In terms of biological role, binds the 23S rRNA. This is Large ribosomal subunit protein bL31 from Maridesulfovibrio salexigens (strain ATCC 14822 / DSM 2638 / NCIMB 8403 / VKM B-1763) (Desulfovibrio salexigens).